The chain runs to 442 residues: tRNA-2-methylthio-N(6)-dimethylallyladenosine synthase (442 aa).

An MTTase N-terminal domain is found at Lys2–Thr120. Residues Cys11, Cys49, Cys83, Cys157, Cys161, and Cys164 each coordinate [4Fe-4S] cluster. One can recognise a Radical SAM core domain in the interval Arg143–Arg375. In terms of domain architecture, TRAM spans Gln378–Glu441.

The protein belongs to the methylthiotransferase family. MiaB subfamily. As to quaternary structure, monomer. Requires [4Fe-4S] cluster as cofactor.

It localises to the cytoplasm. The enzyme catalyses N(6)-dimethylallyladenosine(37) in tRNA + (sulfur carrier)-SH + AH2 + 2 S-adenosyl-L-methionine = 2-methylsulfanyl-N(6)-dimethylallyladenosine(37) in tRNA + (sulfur carrier)-H + 5'-deoxyadenosine + L-methionine + A + S-adenosyl-L-homocysteine + 2 H(+). In terms of biological role, catalyzes the methylthiolation of N6-(dimethylallyl)adenosine (i(6)A), leading to the formation of 2-methylthio-N6-(dimethylallyl)adenosine (ms(2)i(6)A) at position 37 in tRNAs that read codons beginning with uridine. This Neisseria meningitidis serogroup B (strain ATCC BAA-335 / MC58) protein is tRNA-2-methylthio-N(6)-dimethylallyladenosine synthase.